The following is a 226-amino-acid chain: Phosphatidylserine decarboxylase proenzyme (226 aa).

S184 acts as the Schiff-base intermediate with substrate; via pyruvic acid in catalysis. A Pyruvic acid (Ser); by autocatalysis modification is found at S184.

It belongs to the phosphatidylserine decarboxylase family. PSD-A subfamily. Heterodimer of a large membrane-associated beta subunit and a small pyruvoyl-containing alpha subunit. The cofactor is pyruvate. Post-translationally, is synthesized initially as an inactive proenzyme. Formation of the active enzyme involves a self-maturation process in which the active site pyruvoyl group is generated from an internal serine residue via an autocatalytic post-translational modification. Two non-identical subunits are generated from the proenzyme in this reaction, and the pyruvate is formed at the N-terminus of the alpha chain, which is derived from the carboxyl end of the proenzyme. The post-translation cleavage follows an unusual pathway, termed non-hydrolytic serinolysis, in which the side chain hydroxyl group of the serine supplies its oxygen atom to form the C-terminus of the beta chain, while the remainder of the serine residue undergoes an oxidative deamination to produce ammonia and the pyruvoyl prosthetic group on the alpha chain.

It is found in the cell membrane. It carries out the reaction a 1,2-diacyl-sn-glycero-3-phospho-L-serine + H(+) = a 1,2-diacyl-sn-glycero-3-phosphoethanolamine + CO2. Its pathway is phospholipid metabolism; phosphatidylethanolamine biosynthesis; phosphatidylethanolamine from CDP-diacylglycerol: step 2/2. In terms of biological role, catalyzes the formation of phosphatidylethanolamine (PtdEtn) from phosphatidylserine (PtdSer). The polypeptide is Phosphatidylserine decarboxylase proenzyme (Ehrlichia canis (strain Jake)).